Consider the following 425-residue polypeptide: Probable aminotransferase tcpI (425 aa).

K256 is modified (N6-(pyridoxal phosphate)lysine).

It belongs to the class-I pyridoxal-phosphate-dependent aminotransferase family. It depends on pyridoxal 5'-phosphate as a cofactor.

It participates in secondary metabolite biosynthesis. In terms of biological role, probable aminotransferase; part of the gene cluster that mediates the biosynthesis of an unusual class of epipolythiodioxopiperazines (ETPs) lacking the reactive thiol group important for toxicity. Firstly, L-tyrosine is prenylated by tcpD, before undergoing condensation with L-glycine in a reaction catalyzed by the NRPS tcpP leading to the diketopiperazine (DKP) backbone. Afterwards the alpha-carbon of tyrosine is oxidized by the cytochrome P450 tcpC to form a hydroxyl group. However, in contrast other ETP biosynthesis pathways studied so far, tcpC is not able to bishydroxylate the DKP at both alpha-carbon positions, but hydroxylates the alpha-carbon of the tyrosine part and the nitrogen of the glycine part. The next steps involve an alpha,beta-elimination reaction catalyzed by tcpI, a methylation by the methyltransferase tcpN the action of the four enzyme cascade tcpG/K/J/I. Due to a dysfunctional cytochrome P450 monooxygenase tcpC, the pathway leads to the biosynthesis of probable non-toxic metabolites lacking the reactive thiol group. The sequence is that of Probable aminotransferase tcpI from Claviceps purpurea (strain 20.1) (Ergot fungus).